The primary structure comprises 199 residues: MKHPSLIFLTGFSGSGKSTIGPLLANSLGYDFLDLDKEIERQADKPITRIFAEEGEDHFRERERAMLESIVGRKELVVSLGGGALQNNDCFSLIISSGTMVYLHSSPLILAKRMSHKTDRPLMKGENGERLSSEEIEKKILALLEHREPRYKTAQIMVETDTKRIGTTVEELTRKIERYVRRAEKNQNSHSQTKKQSRK.

14-19 is an ATP binding site; sequence GSGKST. S18 provides a ligand contact to Mg(2+). Substrate-binding residues include D36, R60, and G82. Position 120 (R120) interacts with ATP. R147 is a binding site for substrate. Residues 179–199 form a disordered region; that stretch reads YVRRAEKNQNSHSQTKKQSRK.

It belongs to the shikimate kinase family. In terms of assembly, monomer. Mg(2+) is required as a cofactor.

The protein localises to the cytoplasm. The enzyme catalyses shikimate + ATP = 3-phosphoshikimate + ADP + H(+). It functions in the pathway metabolic intermediate biosynthesis; chorismate biosynthesis; chorismate from D-erythrose 4-phosphate and phosphoenolpyruvate: step 5/7. In terms of biological role, catalyzes the specific phosphorylation of the 3-hydroxyl group of shikimic acid using ATP as a cosubstrate. In Chlorobium phaeobacteroides (strain BS1), this protein is Shikimate kinase.